Here is a 1414-residue protein sequence, read N- to C-terminus: MHGKSLGSSRKNDSRSKIRQEKESNIDFDEKHDEYLINLQQRNRALNNSKAKDATQIKLQHLEEGFSLYLNGANADLRKQQSTQDLARESSKSSKIPDDGCSHLPGRRSQTAPGKIQRKAWVQNSIQIKSERGSRVYIGPNTKYSEDFESDDDMNEDQASDQYKYFTDSEKNVPQGPGKKRLVLDASDVKALRESLEISLCLQQDSKYSLDDDDADFVEEELIECETPELDSPSKTQLESKHQAFGHQRLLPGDFVVLEFNALDKKDGRMLTAKRKDNSEFYIPTKPVMVKNKTPRLKSSSFSSKDSFFPRPESRQEILLPTPRRSISENKDSRPSVSTVVDAINNENEAITRAISDGKTEKMTSGPSGISEGVVTKAIEKINLMKISQQKKLLKVLQDIDNDSSTNSNSEGEILKWDSVYLDPAVKDVICITVEILSNWGNQYYIGLTEIQFFDLKNEEIYVSPHDVDIRNVDVPGDPTCLVNGKTLTTKEHFMWTCPFHPPVQLYFIIRNATKSGDFDISKMKIWNYNKALSDLDIGAKLVKIYKDETLVFDGLLAKGSGNQDFDYSNTIDLHSGQIKSSSFISDQFSDETQISNSLGASNNIELKHQSDGLVYTSEQLSSILSEGSNQAKTSQQKDLHFENNTKGLRTFQDEALNKSFQHLALTSSSINCQEDITEGEVGIKMSYNKEEHFKINQSKDFNTMTAELQMVSATSSKEPPPCPRDDNDLTVTDQLERTPGRKECSSLNRFPPWLSSSSNFQQKSHNQPTKNHLNASSSTFTNKRSDQDINQFLDEYVKSSNTYSNKNFKNCSQSKMLCSSSKMDNEDDLENFSNQSSYNSDRPVSGRRKTVQMQDKSEKYEGASFHKTINPVDTKNLRPRWQNDQENNLLESWTSLIKFNKSHRGRISNLEFEGDIFDEFLQQQQKAGKQSDSTKNGSSLMPKGATEIHLESEKEEGSNFEIPVLPYGQHLCIKIVTTWGDRHYVGLNGIEVFASTGKPVEISRIRADPPDINILPAYGKDPRVVVNLIDGVNRTQDDMHLWLAPFSPGKLHFINLDFVEPCRVAMIRIWNYNKSRIHSFRGVKEVEIFLDNELIFKGEIAKASGTLSGAAEQFGDTILFTTDDEILQAMSLFDETFSEELKATETPTEHEIDSLRPSTADSIKEERPFTQAGLSEKLQSNLTDVSENYSDKLPGIYSGKCLLLNFTMTWGDPHYLGLTGMEIVGRDGKALAITLDALSACPQDLSILPEYKDDLRTLDKLIDGVNITNEDTHMWLIPFASGADHTITINFNKSEDIAGIRFWNYNKSPEDTYRGAKIVYVTLDGHAISPPGGFLIRKGPGNCHFDFAQEILFVDYIHEQQILEKQLRSHSKCMELATMDYEAPLMPCGFIFQLQLITSWGDPYYIGLNGLEM.

Disordered regions lie at residues 1 to 32, 80 to 116, 139 to 158, 712 to 731, 756 to 783, 823 to 861, and 924 to 943; these read MHGK…DEKH, QQST…PGKI, GPNT…NEDQ, VSAT…NDLT, SSSS…TFTN, KMDN…SEKY, and QQQK…SLMP. Composition is skewed to basic and acidic residues over residues 10–32 and 86–101; these read RKND…DEKH and LARE…DDGC. Over residues 147-158 the composition is skewed to acidic residues; it reads DFESDDDMNEDQ. Polar residues-rich tracts occupy residues 832 to 843 and 924 to 940; these read NFSNQSSYNSDR and QQQK…NGSS.

It is found in the cytoplasm. The protein resides in the cytoskeleton. Its subcellular location is the cilium axoneme. It localises to the cilium basal body. Functionally, may control cilium integrity. The polypeptide is Protein KATNIP homolog (Xenopus laevis (African clawed frog)).